A 677-amino-acid polypeptide reads, in one-letter code: Electrogenic aspartate/glutamate antiporter SLC25A12, mitochondrial (677 aa).

A2 bears the N-acetylalanine mark. The interval 2 to 294 (AVKVHTTKRG…TLADIERIAP (293 aa)) is regulatory N-terminal domain. Over 2–329 (AVKVHTTKRG…WLQIAESAYR (328 aa)) the chain is Mitochondrial intermembrane. EF-hand domains follow at residues 40–85 (VQRY…SVLC), 86–121 (APDS…TIIH), 122–156 (HHIP…FLQE), and 157–192 (LQLE…IRSH). 5 residues coordinate Ca(2+): D65, T67, D69, L71, and E76. Residues 295-310 (LAEGALPYNLAELQRQ) are linker loop domain. Positions 320–612 (WLQIAESAYR…RWFYIDFGGL (293 aa)) are carrier domain. Solcar repeat units follow at residues 324 to 416 (AESA…VRDK), 424 to 508 (IPLP…CKLL), and 516 to 604 (VGGI…LQRW). Residues 330–347 (FTLGSVAGAVGATAVYPI) form a helical membrane-spanning segment. At 348–390 (DLVKTRMQNQRGTGSVVGELMYKNSFDCFKKVLRYEGFFGLYR) the chain is on the mitochondrial matrix side. Residues 391 to 410 (GLIPQLIGVAPEKAIKLTVN) traverse the membrane as a helical segment. At 411-433 (DFVRDKFTKRDGSIPLPAEILAG) the chain is on the mitochondrial intermembrane side. A helical transmembrane segment spans residues 434-447 (GCAGGSQVIFTNPL). Residues 448 to 482 (EIVKIRLQVAGEITTGPRVSALNVLQDLGLFGLYK) are Mitochondrial matrix-facing. Residues 483–502 (GAKACFLRDIPFSAIYFPVY) traverse the membrane as a helical segment. The Mitochondrial intermembrane segment spans residues 503–521 (AHCKLLLADENGRVGGINL). A helical transmembrane segment spans residues 522–539 (LTAGALAGVPAASLVTPA). Residues 540–578 (DVIKTRLQVAARAGQTTYSGVVDCFRKILREEGPSAFWK) lie on the Mitochondrial matrix side of the membrane. Residues 579–598 (GTAARVFRSSPQFGVTLVTY) form a helical membrane-spanning segment. Over 599 to 677 (ELLQRWFYID…AQPKAAAAAQ (79 aa)) the chain is Mitochondrial intermembrane. The C-terminal domain stretch occupies residues 613–677 (KPSGSEPTPK…AQPKAAAAAQ (65 aa)).

It belongs to the mitochondrial carrier (TC 2.A.29) family. In terms of assembly, homodimer (via N-terminus).

It localises to the mitochondrion inner membrane. The enzyme catalyses L-aspartate(in) + L-glutamate(out) + H(+)(out) = L-aspartate(out) + L-glutamate(in) + H(+)(in). The catalysed reaction is 3-sulfino-L-alanine(out) + L-glutamate(in) + H(+)(in) = 3-sulfino-L-alanine(in) + L-glutamate(out) + H(+)(out). It catalyses the reaction 3-sulfino-L-alanine(out) + L-aspartate(in) = 3-sulfino-L-alanine(in) + L-aspartate(out). Its function is as follows. Mitochondrial electrogenic aspartate/glutamate antiporter that favors efflux of aspartate and entry of glutamate and proton within the mitochondria as part of the malate-aspartate shuttle. Also mediates the uptake of L-cysteinesulfinate (3-sulfino-L-alanine) by mitochondria in exchange of L-glutamate and proton. Can also exchange L-cysteinesulfinate with aspartate in their anionic form without any proton translocation. Lacks transport activity towards L-glutamine or gamma-aminobutyric acid (GABA). The sequence is that of Electrogenic aspartate/glutamate antiporter SLC25A12, mitochondrial from Mus musculus (Mouse).